A 132-amino-acid polypeptide reads, in one-letter code: Small ribosomal subunit protein uS8 (132 aa).

This sequence belongs to the universal ribosomal protein uS8 family. As to quaternary structure, part of the 30S ribosomal subunit. Contacts proteins S5 and S12.

One of the primary rRNA binding proteins, it binds directly to 16S rRNA central domain where it helps coordinate assembly of the platform of the 30S subunit. The protein is Small ribosomal subunit protein uS8 of Corynebacterium jeikeium (strain K411).